Consider the following 94-residue polypeptide: Exodeoxyribonuclease 7 small subunit (94 aa).

Belongs to the XseB family. As to quaternary structure, heterooligomer composed of large and small subunits.

The protein localises to the cytoplasm. It catalyses the reaction Exonucleolytic cleavage in either 5'- to 3'- or 3'- to 5'-direction to yield nucleoside 5'-phosphates.. Bidirectionally degrades single-stranded DNA into large acid-insoluble oligonucleotides, which are then degraded further into small acid-soluble oligonucleotides. The sequence is that of Exodeoxyribonuclease 7 small subunit from Trichormus variabilis (strain ATCC 29413 / PCC 7937) (Anabaena variabilis).